We begin with the raw amino-acid sequence, 489 residues long: Nuclear distribution protein PAC1 (489 aa).

The stretch at 66 to 98 forms a coiled coil; the sequence is STVLRLQKKIIDLENEISNLNNIINSSNSDNNG. WD repeat units lie at residues 119–158, 164–205, 206–246, 249–291, 328–368, 389–428, and 437–486; these read QCEN…NTIP, AHTR…RTLN, GHEH…SLKS, GHSE…GLAM, IPLE…IAPH, GHSS…ETGS, and GHDG…NSIK.

This sequence belongs to the WD repeat LIS1/nudF family. Self-associates. Interacts with NDL1 and dynein.

The protein localises to the cytoplasm. It is found in the cytoskeleton. It localises to the spindle pole. Positively regulates the activity of the minus-end directed microtubule motor protein dynein. Plays a central role in positioning the mitotic spindle at the bud neck during cell division. Targets cytoplasmic dynein to microtubule plus ends, thereby promoting dynein-mediated microtubule sliding along the bud cortex and consequently the movement of the mitotic spindle to the bud neck. The chain is Nuclear distribution protein PAC1 from Candida dubliniensis (strain CD36 / ATCC MYA-646 / CBS 7987 / NCPF 3949 / NRRL Y-17841) (Yeast).